Reading from the N-terminus, the 386-residue chain is Succinate--CoA ligase [ADP-forming] subunit beta (386 aa).

The region spanning 9-244 (KELLKQFGVP…LDEEDPAEIE (236 aa)) is the ATP-grasp domain. Residues lysine 46, 53-55 (GRG), glutamate 99, alanine 102, and glutamate 107 contribute to the ATP site. Positions 199 and 213 each coordinate Mg(2+). Substrate is bound by residues asparagine 264 and 321–323 (GIM).

Belongs to the succinate/malate CoA ligase beta subunit family. As to quaternary structure, heterotetramer of two alpha and two beta subunits. Mg(2+) serves as cofactor.

The enzyme catalyses succinate + ATP + CoA = succinyl-CoA + ADP + phosphate. It carries out the reaction GTP + succinate + CoA = succinyl-CoA + GDP + phosphate. Its pathway is carbohydrate metabolism; tricarboxylic acid cycle; succinate from succinyl-CoA (ligase route): step 1/1. Functionally, succinyl-CoA synthetase functions in the citric acid cycle (TCA), coupling the hydrolysis of succinyl-CoA to the synthesis of either ATP or GTP and thus represents the only step of substrate-level phosphorylation in the TCA. The beta subunit provides nucleotide specificity of the enzyme and binds the substrate succinate, while the binding sites for coenzyme A and phosphate are found in the alpha subunit. The sequence is that of Succinate--CoA ligase [ADP-forming] subunit beta from Bordetella avium (strain 197N).